Here is a 406-residue protein sequence, read N- to C-terminus: Exodeoxyribonuclease 7 large subunit (406 aa).

The protein belongs to the XseA family. As to quaternary structure, heterooligomer composed of large and small subunits.

The protein resides in the cytoplasm. The enzyme catalyses Exonucleolytic cleavage in either 5'- to 3'- or 3'- to 5'-direction to yield nucleoside 5'-phosphates.. In terms of biological role, bidirectionally degrades single-stranded DNA into large acid-insoluble oligonucleotides, which are then degraded further into small acid-soluble oligonucleotides. The protein is Exodeoxyribonuclease 7 large subunit of Desulfitobacterium hafniense (strain Y51).